Here is a 707-residue protein sequence, read N- to C-terminus: tRNA 5-methylaminomethyl-2-thiouridine biosynthesis bifunctional protein MnmC (707 aa).

Residues 1-264 form a tRNA (mnm(5)s(2)U34)-methyltransferase region; sequence MTKKLEHEYI…KREMLFGTFE (264 aa). The FAD-dependent cmnm(5)s(2)U34 oxidoreductase stretch occupies residues 312 to 707; sequence IGGGLAGAHA…LFRDLTRNRI (396 aa).

It in the N-terminal section; belongs to the methyltransferase superfamily. tRNA (mnm(5)s(2)U34)-methyltransferase family. In the C-terminal section; belongs to the DAO family. The cofactor is FAD.

Its subcellular location is the cytoplasm. It catalyses the reaction 5-aminomethyl-2-thiouridine(34) in tRNA + S-adenosyl-L-methionine = 5-methylaminomethyl-2-thiouridine(34) in tRNA + S-adenosyl-L-homocysteine + H(+). Catalyzes the last two steps in the biosynthesis of 5-methylaminomethyl-2-thiouridine (mnm(5)s(2)U) at the wobble position (U34) in tRNA. Catalyzes the FAD-dependent demodification of cmnm(5)s(2)U34 to nm(5)s(2)U34, followed by the transfer of a methyl group from S-adenosyl-L-methionine to nm(5)s(2)U34, to form mnm(5)s(2)U34. In Saccharophagus degradans (strain 2-40 / ATCC 43961 / DSM 17024), this protein is tRNA 5-methylaminomethyl-2-thiouridine biosynthesis bifunctional protein MnmC.